The sequence spans 463 residues: L-2-hydroxyglutarate dehydrogenase, mitochondrial (463 aa).

Residues 1–52 (MVPALRYLGSVCGRARGIFPGGFSAAHTPASGKSRLLCQGGRRASTSSFDIV) constitute a mitochondrion transit peptide. 2 positions are modified to N6-acetyllysine: Lys104 and Lys173.

This sequence belongs to the L2HGDH family. The cofactor is FAD.

It is found in the mitochondrion. It catalyses the reaction (S)-2-hydroxyglutarate + A = 2-oxoglutarate + AH2. The polypeptide is L-2-hydroxyglutarate dehydrogenase, mitochondrial (L2HGDH) (Bos taurus (Bovine)).